The sequence spans 392 residues: Proteasome-activating nucleotidase (392 aa).

Positions 19–53 (IVRLLEEKIESLTKELEKLRQDLNWYKGELEKLLA) form a coiled coil. ATP is bound by residues 178–183 (GTGKTL) and tyrosine 317. The segment at 390–392 (KYV) is docks into pockets in the proteasome alpha-ring to cause gate opening.

The protein belongs to the AAA ATPase family. As to quaternary structure, homohexamer. The hexameric complex has a two-ring architecture resembling a top hat that caps the 20S proteasome core at one or both ends. Upon ATP-binding, the C-terminus of PAN interacts with the alpha-rings of the proteasome core by binding to the intersubunit pockets.

It localises to the cytoplasm. Functionally, ATPase which is responsible for recognizing, binding, unfolding and translocation of substrate proteins into the archaeal 20S proteasome core particle. Is essential for opening the gate of the 20S proteasome via an interaction with its C-terminus, thereby allowing substrate entry and access to the site of proteolysis. Thus, the C-termini of the proteasomal ATPase function like a 'key in a lock' to induce gate opening and therefore regulate proteolysis. Unfolding activity requires energy from ATP hydrolysis, whereas ATP binding alone promotes ATPase-20S proteasome association which triggers gate opening, and supports translocation of unfolded substrates. The protein is Proteasome-activating nucleotidase of Sulfurisphaera tokodaii (strain DSM 16993 / JCM 10545 / NBRC 100140 / 7) (Sulfolobus tokodaii).